Here is a 454-residue protein sequence, read N- to C-terminus: CCA-adding enzyme (454 aa).

ATP is bound by residues Ser-51 and Lys-54. CTP contacts are provided by Ser-51 and Lys-54. Asp-63, Asp-65, and Asp-118 together coordinate Mg(2+). ATP-binding residues include His-141, Lys-161, and Tyr-170. CTP-binding residues include His-141, Lys-161, and Tyr-170.

Belongs to the tRNA nucleotidyltransferase/poly(A) polymerase family. Archaeal CCA-adding enzyme subfamily. In terms of assembly, homodimer. Mg(2+) serves as cofactor.

The catalysed reaction is a tRNA precursor + 2 CTP + ATP = a tRNA with a 3' CCA end + 3 diphosphate. The enzyme catalyses a tRNA with a 3' CCA end + 2 CTP + ATP = a tRNA with a 3' CCACCA end + 3 diphosphate. Functionally, catalyzes the addition and repair of the essential 3'-terminal CCA sequence in tRNAs without using a nucleic acid template. Adds these three nucleotides in the order of C, C, and A to the tRNA nucleotide-73, using CTP and ATP as substrates and producing inorganic pyrophosphate. tRNA 3'-terminal CCA addition is required both for tRNA processing and repair. Also involved in tRNA surveillance by mediating tandem CCA addition to generate a CCACCA at the 3' terminus of unstable tRNAs. While stable tRNAs receive only 3'-terminal CCA, unstable tRNAs are marked with CCACCA and rapidly degraded. The protein is CCA-adding enzyme of Methanothermobacter thermautotrophicus (strain ATCC 29096 / DSM 1053 / JCM 10044 / NBRC 100330 / Delta H) (Methanobacterium thermoautotrophicum).